The following is a 165-amino-acid chain: Nucleotide-binding protein PMM0481 (165 aa).

It belongs to the YajQ family.

Its function is as follows. Nucleotide-binding protein. The chain is Nucleotide-binding protein PMM0481 from Prochlorococcus marinus subsp. pastoris (strain CCMP1986 / NIES-2087 / MED4).